The following is a 613-amino-acid chain: Protein translocase subunit SecD (613 aa).

The next 6 membrane-spanning stretches (helical) occupy residues 10–30, 452–472, 477–497, 503–523, 548–568, and 576–596; these read ALVVAVAILSIYQLVPSWFYF, KGTLAALVGLALVVVFMVVYY, LVADVALALNGLLVLAVMSMI, LPGIAGFVLTLGMAVDANVLI, VFWTIVDSHVTTLVAGVVLFQ, and GFAVTLIIGLVASMFTSIVVT.

This sequence belongs to the SecD/SecF family. SecD subfamily. In terms of assembly, forms a complex with SecF. Part of the essential Sec protein translocation apparatus which comprises SecA, SecYEG and auxiliary proteins SecDF-YajC and YidC.

The protein resides in the cell inner membrane. Functionally, part of the Sec protein translocase complex. Interacts with the SecYEG preprotein conducting channel. SecDF uses the proton motive force (PMF) to complete protein translocation after the ATP-dependent function of SecA. In Anaeromyxobacter dehalogenans (strain 2CP-C), this protein is Protein translocase subunit SecD.